Here is a 235-residue protein sequence, read N- to C-terminus: Serine protease SplA (235 aa).

The first 35 residues, 1–35 (MNKNVMVKGLTALTILTSLGFAENISNQPHSIAKA), serve as a signal peptide directing secretion. Active-site charge relay system residues include His74, Asp113, and Ser189.

The protein belongs to the peptidase S1B family.

It localises to the secreted. The polypeptide is Serine protease SplA (splA) (Staphylococcus aureus (strain USA300)).